We begin with the raw amino-acid sequence, 218 residues long: Elongation factor Ts (218 aa).

The tract at residues 82 to 85 is involved in Mg(2+) ion dislocation from EF-Tu; that stretch reads TDFV.

This sequence belongs to the EF-Ts family.

The protein localises to the cytoplasm. In terms of biological role, associates with the EF-Tu.GDP complex and induces the exchange of GDP to GTP. It remains bound to the aminoacyl-tRNA.EF-Tu.GTP complex up to the GTP hydrolysis stage on the ribosome. In Prochlorococcus marinus (strain AS9601), this protein is Elongation factor Ts.